A 158-amino-acid chain; its full sequence is MNQEKLAKLQAQVRIGGKGTARRKKKVVHRTATADDKKLQSSLKKLAVNNIAGIEEVNMIKDDGTVIHFNNPKVQASLSANTFAITGHAEAKPITEMLPGILSQLGADSLTSLRKLAEQFPRQVLDSKAPKPEDIDEEDDDVPDLVENFDEASKNEAN.

Position 5 is an N6-methyllysine (K5). One can recognise an NAC-A/B domain in the interval 33-98 (TADDKKLQSS…AEAKPITEML (66 aa)). Phosphothreonine is present on T111. The disordered stretch occupies residues 122 to 158 (RQVLDSKAPKPEDIDEEDDDVPDLVENFDEASKNEAN). A compositionally biased stretch (acidic residues) spans 134–150 (DIDEEDDDVPDLVENFD).

The protein belongs to the NAC-beta family.

The protein is Transcription factor BTF3 homolog 4 (BTF3L4) of Homo sapiens (Human).